Here is a 234-residue protein sequence, read N- to C-terminus: Large ribosomal subunit protein bL25 (234 aa).

This sequence belongs to the bacterial ribosomal protein bL25 family. CTC subfamily. As to quaternary structure, part of the 50S ribosomal subunit; part of the 5S rRNA/L5/L18/L25 subcomplex. Contacts the 5S rRNA. Binds to the 5S rRNA independently of L5 and L18.

Functionally, this is one of the proteins that binds to the 5S RNA in the ribosome where it forms part of the central protuberance. The sequence is that of Large ribosomal subunit protein bL25 from Rhodopseudomonas palustris (strain BisA53).